A 194-amino-acid chain; its full sequence is ATP synthase subunit delta (194 aa).

It belongs to the ATPase delta chain family. As to quaternary structure, F-type ATPases have 2 components, F(1) - the catalytic core - and F(0) - the membrane proton channel. F(1) has five subunits: alpha(3), beta(3), gamma(1), delta(1), epsilon(1). F(0) has three main subunits: a(1), b(2) and c(10-14). The alpha and beta chains form an alternating ring which encloses part of the gamma chain. F(1) is attached to F(0) by a central stalk formed by the gamma and epsilon chains, while a peripheral stalk is formed by the delta and b chains.

It localises to the cell inner membrane. In terms of biological role, f(1)F(0) ATP synthase produces ATP from ADP in the presence of a proton or sodium gradient. F-type ATPases consist of two structural domains, F(1) containing the extramembraneous catalytic core and F(0) containing the membrane proton channel, linked together by a central stalk and a peripheral stalk. During catalysis, ATP synthesis in the catalytic domain of F(1) is coupled via a rotary mechanism of the central stalk subunits to proton translocation. Its function is as follows. This protein is part of the stalk that links CF(0) to CF(1). It either transmits conformational changes from CF(0) to CF(1) or is implicated in proton conduction. The protein is ATP synthase subunit delta of Bartonella quintana (strain Toulouse) (Rochalimaea quintana).